Consider the following 40-residue polypeptide: Thioredoxin (40 aa).

Cys29 and Cys32 form a disulfide bridge.

The protein belongs to the thioredoxin family.

Functionally, participates in various redox reactions through the reversible oxidation of its active center dithiol to a disulfide and catalyzes dithiol-disulfide exchange reactions. In Clostridium sporogenes, this protein is Thioredoxin (trxA).